The chain runs to 1249 residues: Cilia- and flagella-associated protein 57 (1249 aa).

WD repeat units lie at residues 105–148, 195–233, 335–374, 386–425, 427–469, 471–506, 509–548, and 635–674; these read FQVQ…AIIK, GESSNYLAHAWVSEDRVIVGTDTGKLFLFESGDQRWETS, SDKQDVLCLCFSPSEETLIASTNKNQLYSITMSLTEISKG, LHSASITGLDTCIRKPLIATCSLDRSVRIWNYESNTLELY, EYQE…KEYS, RGCKECSFSNGGHLFAAVNGNVIHIFTTTSLENINI, GHTGKIRSLVWNLDDSKLVSAGTDGAVYEWNLSTGKRETE, and AHAGPVMKMLLTFDDQFLLTVGEDGCLFTWKVFDKDGRGI. Coiled coils occupy residues 690 to 1056 and 1094 to 1165; these read KTDM…KTDL and SDLQ…SALK.

This sequence belongs to the CFAP57 family. In terms of assembly, may form homodimers. Associates with components of the nexin-dynein regulatory complex (N-DRC) and the CFAP184:CFAP263 complex. Predominanly expressed in testis, lung and skin. Weak expression in brain and kidney.

It localises to the cytoplasm. The protein resides in the cytoskeleton. Its subcellular location is the cilium axoneme. In terms of biological role, associates with components of the nexin-dynein regulatory complex (N-DRC), a key regulator of ciliary/flagellar motility, and might act as an inner dynein arm (IDA) hub or linkage. The polypeptide is Cilia- and flagella-associated protein 57 (Mus musculus (Mouse)).